A 370-amino-acid polypeptide reads, in one-letter code: Probable endopolygalacturonase A (370 aa).

Residues 1-19 (MPSAKPLFCLATLAGAALA) form the signal peptide. Residues 20 to 32 (APAPSRATDFNKR) constitute a propeptide that is removed on maturation. A disulfide bond links Cys-35 and Cys-50. PbH1 repeat units follow at residues 162–192 (SDNLVIEDVTIDNSDGDSEGGHNTDGFDISE), 193–214 (STYITITGATVKNQDDCVAINS), 215–235 (GENIYFSGGTCSGGHGLSIGS), 244–265 (VKNVTFIDSTVSDSENGVRIKT), 273–295 (VEDITYSNIQLSGISDYGIVIEQ), and 307–352 (SNGV…DITG). Asp-207 acts as the Proton donor in catalysis. Residues Cys-209 and Cys-225 are joined by a disulfide bond. Residue His-229 is part of the active site. Asn-246 carries an N-linked (GlcNAc...) asparagine glycan. Cystine bridges form between Cys-335/Cys-340 and Cys-359/Cys-368.

It belongs to the glycosyl hydrolase 28 family.

It localises to the secreted. The catalysed reaction is (1,4-alpha-D-galacturonosyl)n+m + H2O = (1,4-alpha-D-galacturonosyl)n + (1,4-alpha-D-galacturonosyl)m.. In terms of biological role, involved in maceration and soft-rotting of plant tissue. Hydrolyzes the 1,4-alpha glycosidic bonds of de-esterified pectate in the smooth region of the plant cell wall. The protein is Probable endopolygalacturonase A (pgaA) of Aspergillus kawachii (strain NBRC 4308) (White koji mold).